The chain runs to 299 residues: Ankyrin repeat domain-containing protein 54 (299 aa).

The disordered stretch occupies residues 1–27 (MAATGGGADDESRSGRSSSDGECAVAP). The residue at position 2 (Ala2) is an N-acetylalanine. Phosphoserine is present on Ser62. Positions 98–116 (RRLGPTGKEVHALKRLRDS) match the Nuclear localization signal (NLS) motif. ANK repeat units lie at residues 108 to 137 (HALK…DPCA), 141 to 170 (KGRT…DPNQ), 174 to 203 (LGNT…RVDA), and 207 to 239 (AGRT…EVKQ). The tract at residues 140–240 (DKGRTALHFA…EAVRLEVKQI (101 aa)) is LYN-binding. Positions 282–292 (LLASFTSLSLQ) match the Nuclear export signal (NES) motif.

Interacts (via ankyrin repeat region) with LYN (via SH3-domain) in an activation-independent status of LYN. Forms a multiprotein complex with LYN and HCLS1. Interacts with TSN2, VAV1, DBNL and LASP1. In terms of tissue distribution, expressed in a variety of hemopoietic cell lines and tissue with high levels in testis. Highly expressed in ciliated cells.

The protein localises to the nucleus. It is found in the cytoplasm. The protein resides in the midbody. Plays an important role in regulating intracellular signaling events associated with erythroid terminal differentiation. The polypeptide is Ankyrin repeat domain-containing protein 54 (Ankrd54) (Mus musculus (Mouse)).